The sequence spans 496 residues: NAD(P)H-quinone oxidoreductase subunit 2, chloroplastic (496 aa).

Helical transmembrane passes span 14-34, 42-62, 79-99, 109-129, 133-153, 167-187, 210-230, 244-264, 281-301, 305-325, 334-354, 377-397, 400-420, and 469-489; these read SFLPEGILIFNIIFILILDLV, MLVKISFIGLLLSMLTLIQQW, FTTCFRLIISLCCILCIPLSF, LTEFIIFLLFTTLGAMILSSA, ITIFISLECLGLGSYLLTGYV, LIIGGTSSSIFAYGLSWLYGL, LASWFAYICIIVGIGFKLSLV, PTPVVAFLSIISKAGALALTI, ILQILAILSMIVGNLLAMVET, RILTYSSIAQAGYLLIGIVAG, LVYMIFYLFMNIGAFSCIILF, ASCLSLCLLSLAGIPPLTGFF, ILLFWSAWQSGFYFLVMTGIF, and IYLCTFISGFVGIFMNPVIYF.

It belongs to the complex I subunit 2 family. In terms of assembly, NDH is composed of at least 16 different subunits, 5 of which are encoded in the nucleus.

The protein localises to the plastid. It is found in the chloroplast thylakoid membrane. It catalyses the reaction a plastoquinone + NADH + (n+1) H(+)(in) = a plastoquinol + NAD(+) + n H(+)(out). It carries out the reaction a plastoquinone + NADPH + (n+1) H(+)(in) = a plastoquinol + NADP(+) + n H(+)(out). NDH shuttles electrons from NAD(P)H:plastoquinone, via FMN and iron-sulfur (Fe-S) centers, to quinones in the photosynthetic chain and possibly in a chloroplast respiratory chain. The immediate electron acceptor for the enzyme in this species is believed to be plastoquinone. Couples the redox reaction to proton translocation, and thus conserves the redox energy in a proton gradient. The polypeptide is NAD(P)H-quinone oxidoreductase subunit 2, chloroplastic (Chara vulgaris (Common stonewort)).